Reading from the N-terminus, the 295-residue chain is Ribosomal RNA small subunit methyltransferase A (295 aa).

Asn-40, Val-42, Gly-67, Glu-88, Asp-118, and Asn-135 together coordinate S-adenosyl-L-methionine.

It belongs to the class I-like SAM-binding methyltransferase superfamily. rRNA adenine N(6)-methyltransferase family. RsmA subfamily.

The protein resides in the cytoplasm. The catalysed reaction is adenosine(1518)/adenosine(1519) in 16S rRNA + 4 S-adenosyl-L-methionine = N(6)-dimethyladenosine(1518)/N(6)-dimethyladenosine(1519) in 16S rRNA + 4 S-adenosyl-L-homocysteine + 4 H(+). In terms of biological role, specifically dimethylates two adjacent adenosines (A1518 and A1519) in the loop of a conserved hairpin near the 3'-end of 16S rRNA in the 30S particle. May play a critical role in biogenesis of 30S subunits. The protein is Ribosomal RNA small subunit methyltransferase A of Arthrobacter sp. (strain FB24).